A 282-amino-acid polypeptide reads, in one-letter code: Pantothenate synthetase (282 aa).

30–37 contacts ATP; sequence MGYYHAGH. Catalysis depends on His-37, which acts as the Proton donor. Position 61 (Gln-61) interacts with (R)-pantoate. Beta-alanine is bound at residue Gln-61. 147–150 contributes to the ATP binding site; it reads GQKD. Gln-153 serves as a coordination point for (R)-pantoate. Residues Val-176 and 184 to 187 each bind ATP; that span reads LSSR.

It belongs to the pantothenate synthetase family. Homodimer.

The protein resides in the cytoplasm. It carries out the reaction (R)-pantoate + beta-alanine + ATP = (R)-pantothenate + AMP + diphosphate + H(+). It functions in the pathway cofactor biosynthesis; (R)-pantothenate biosynthesis; (R)-pantothenate from (R)-pantoate and beta-alanine: step 1/1. Functionally, catalyzes the condensation of pantoate with beta-alanine in an ATP-dependent reaction via a pantoyl-adenylate intermediate. This Desulfovibrio desulfuricans (strain ATCC 27774 / DSM 6949 / MB) protein is Pantothenate synthetase.